Here is a 972-residue protein sequence, read N- to C-terminus: Translation initiation factor IF-2 (972 aa).

Basic and acidic residues predominate over residues 48–63 (DHLRKSHGATDGDKRK). 2 disordered regions span residues 48-85 (DHLR…KART) and 99-385 (RDDV…QAPT). Over residues 105–114 (GAEQGQAQVA) the composition is skewed to low complexity. Residues 121-181 (ELKRREEEAR…EEEAAAKRVA (61 aa)) show a composition bias toward basic and acidic residues. Residues 182 to 205 (AEAAAAQQQAAAQQAAAAEQQEAA) are compositionally biased toward low complexity. The segment covering 212–263 (DEARAAAERAAQREAAKKAEDAAREAADKARAEQEEISKRRAAAEAEARAIR) has biased composition (basic and acidic residues). The segment covering 279-288 (PPKPVEPPKP) has biased composition (pro residues). The segment covering 313–328 (PAGAAAPATTAPAGAG) has biased composition (low complexity). The segment covering 357-370 (SSGGVDRGWRGGPK) has biased composition (gly residues). Positions 472 to 641 (PRPPVVTVMG…LLQAEVLELK (170 aa)) constitute a tr-type G domain. Residues 481-488 (GHVDHGKT) are G1. 481-488 (GHVDHGKT) contributes to the GTP binding site. Residues 506–510 (GITQH) are G2. The interval 527 to 530 (DTPG) is G3. GTP-binding positions include 527–531 (DTPGH) and 581–584 (NKID). The G4 stretch occupies residues 581-584 (NKID). The segment at 617-619 (SAK) is G5.

Belongs to the TRAFAC class translation factor GTPase superfamily. Classic translation factor GTPase family. IF-2 subfamily.

The protein resides in the cytoplasm. One of the essential components for the initiation of protein synthesis. Protects formylmethionyl-tRNA from spontaneous hydrolysis and promotes its binding to the 30S ribosomal subunits. Also involved in the hydrolysis of GTP during the formation of the 70S ribosomal complex. In Burkholderia lata (strain ATCC 17760 / DSM 23089 / LMG 22485 / NCIMB 9086 / R18194 / 383), this protein is Translation initiation factor IF-2.